A 154-amino-acid polypeptide reads, in one-letter code: SsrA-binding protein (154 aa).

This sequence belongs to the SmpB family.

Its subcellular location is the cytoplasm. Its function is as follows. Required for rescue of stalled ribosomes mediated by trans-translation. Binds to transfer-messenger RNA (tmRNA), required for stable association of tmRNA with ribosomes. tmRNA and SmpB together mimic tRNA shape, replacing the anticodon stem-loop with SmpB. tmRNA is encoded by the ssrA gene; the 2 termini fold to resemble tRNA(Ala) and it encodes a 'tag peptide', a short internal open reading frame. During trans-translation Ala-aminoacylated tmRNA acts like a tRNA, entering the A-site of stalled ribosomes, displacing the stalled mRNA. The ribosome then switches to translate the ORF on the tmRNA; the nascent peptide is terminated with the 'tag peptide' encoded by the tmRNA and targeted for degradation. The ribosome is freed to recommence translation, which seems to be the essential function of trans-translation. This Synechocystis sp. (strain ATCC 27184 / PCC 6803 / Kazusa) protein is SsrA-binding protein.